Here is a 251-residue protein sequence, read N- to C-terminus: MKNYLFEVCTNSVESCIAAQEGGANRVELCAGIPEGGTTPSYGEIAMAREVLTTTRLHVIIRPRGGDFLYSPVEVKTMLKDIEMVRQLGADGVVFGCLTTNGGIDVPVMKQLMEASKGLSVTFHRAFDVCRDASEALEQIIDLGCDRILTSGQQATAELGIPLLKELRERANGRITLLAGCGVNEKNICRIAKETGIQEFHFSARESIKSGMEYKNEAVSMGGTVHISEYERNVTTVKRVKDTIESITSSL.

This sequence belongs to the CutC family.

The protein localises to the cytoplasm. This chain is PF03932 family protein CutC, found in Bacteroides fragilis (strain YCH46).